We begin with the raw amino-acid sequence, 156 residues long: Ribosomal RNA large subunit methyltransferase H (156 aa).

S-adenosyl-L-methionine contacts are provided by residues Leu72, Gly104, and 123 to 128; that span reads LGPMTF.

The protein belongs to the RNA methyltransferase RlmH family. In terms of assembly, homodimer.

It is found in the cytoplasm. The catalysed reaction is pseudouridine(1915) in 23S rRNA + S-adenosyl-L-methionine = N(3)-methylpseudouridine(1915) in 23S rRNA + S-adenosyl-L-homocysteine + H(+). Functionally, specifically methylates the pseudouridine at position 1915 (m3Psi1915) in 23S rRNA. The protein is Ribosomal RNA large subunit methyltransferase H of Nitratidesulfovibrio vulgaris (strain ATCC 29579 / DSM 644 / CCUG 34227 / NCIMB 8303 / VKM B-1760 / Hildenborough) (Desulfovibrio vulgaris).